A 573-amino-acid polypeptide reads, in one-letter code: MAASAADRMGRQRMSGLSCSAPPRPTVVTNPGNKQDGNYAPVLAEDEREAVALLLRYLENRGEVDFFSNGPLRALSTLVYSDNIDLQRSAALAFAEITEKDIRPVNRDCLEPVLLLLQNTDPDIQRAASAALGNLAVNNENKVLIVEMGGFEPLIRQMMSPNVEVQCNAVGCITNLATHEANKSKIARSGALLPLTKLAKSKDMRVQRNATGALLNMTHSDQNRQELVNAGAIPILVSLLSSRDPDVQYYSTTALSNIAVDESNRKKLSSSEPRLVEHLIKLMDSGSPRVQCQAALALRNLASDSDYQLEIVKANGLPHLFNLFQSTHTPLVLAAVACIRNISIHPLNETPIIEAGFLKTLVELLGASDNEEIQCHTISTLRNLAASSERNKLEIVEAGAVQKCKELVLDAPRLVQSEMTACLAVLALGDELKGTLLELGIAEVLIPLTLSDNIEVQGNSAAALGNLSSKVGNYDTFVNHWNEPSGGIREFLIRFLTSGDSTFGHIAVWTVLQLLESKDQRLKDLLKNSNEIVDAIHQLSSMNSDGADGDGEDMRDSKSEVVMLAKKVAPLLK.

The disordered stretch occupies residues 1-36; sequence MAASAADRMGRQRMSGLSCSAPPRPTVVTNPGNKQD. Over residues 27-36 the composition is skewed to polar residues; that stretch reads VVTNPGNKQD. ARM repeat units follow at residues 60–97, 98–137, 139–178, 180–219, 221–260, 264–303, 305–344, 346–386, and 430–469; these read NRGE…FAEI, TEKD…NLAV, NENK…NLAT, EANK…NMTH, DQNR…NIAV, NRKK…NLAS, SDYQ…NISI, PLNE…NLAA, and DELK…NLSS.

This sequence belongs to the beta-catenin family.

The protein localises to the vacuole membrane. Functions in both vacuole inheritance and protein targeting from the cytoplasm to vacuole. The chain is Vacuolar protein 8 (VAC8) from Yarrowia lipolytica (strain CLIB 122 / E 150) (Yeast).